The following is a 126-amino-acid chain: Adenosine 5'-monophosphoramidase HINT1 (126 aa).

Alanine 2 is modified (N-acetylalanine). Positions 18–126 constitute an HIT domain; the sequence is IFGKIIRKEI…GGRQMNWPPG (109 aa). An N6-acetyllysine mark is found at lysine 21 and lysine 30. 43–44 provides a ligand contact to AMP; it reads DI. A phosphoserine mark is found at serine 45 and serine 72. AMP is bound by residues asparagine 99, 105–107, and 112–114; these read GQS and HLH. The Histidine triad motif signature appears at 110 to 114; that stretch reads HVHLH. Histidine 112 acts as the Tele-AMP-histidine intermediate in catalysis.

This sequence belongs to the HINT family. Homodimer. Interacts with CDK7. Interacts with RUVBL1 and RUVBL2 and is associated with the LEF1/TCF1-CTNNB1 complex and with a KAT5 histone acetyltransferase complex. Identified in a complex with MITF and CTNNB1. Interacts with CDC34 and RBX1, and is part of a SCF (SKP2-CUL1-F-box protein) E3 ubiquitin-protein ligase complex. Interacts with SUMO1, SUMO2 and RGS17. Interacts with the Ten-1 ICD form of TENM1. Interacts with CALM1; interaction increases in the presence of calcium ions. In terms of tissue distribution, widely expressed.

Its subcellular location is the cytoplasm. It localises to the nucleus. The catalysed reaction is adenosine 5'-phosphoramidate + H2O = AMP + NH4(+). Exhibits adenosine 5'-monophosphoramidase activity, hydrolyzing purine nucleotide phosphoramidates with a single phosphate group such as adenosine 5'monophosphoramidate (AMP-NH2) to yield AMP and NH2. Hydrolyzes adenosine 5'monophosphomorpholidate (AMP-morpholidate) and guanosine 5'monophosphomorpholidate (GMP-morpholidate). Hydrolyzes lysyl-AMP (AMP-N-epsilon-(N-alpha-acetyl lysine methyl ester)) generated by lysine tRNA ligase. Hydrolyzes Met-AMP, His-AMP, Asp-AMP, lysyl-GMP (GMP-N-epsilon-(N-alpha-acetyl lysine methyl ester)) and AMP-N-alanine methyl ester. Can also convert adenosine 5'-O-phosphorothioate and guanosine 5'-O-phosphorothioate to the corresponding nucleoside 5'-O-phosphates with concomitant release of hydrogen sulfide. In addition, functions as a scaffolding protein that modulates transcriptional activation by the LEF1/TCF1-CTNNB1 complex and by the complex formed with MITF and CTNNB1. Modulates p53/TP53 levels and p53/TP53-mediated apoptosis. Modulates proteasomal degradation of target proteins by the SCF (SKP2-CUL1-F-box protein) E3 ubiquitin-protein ligase complex. Also exhibits SUMO-specific isopeptidase activity, deconjugating SUMO1 from RANGAP1 and RGS17. The polypeptide is Adenosine 5'-monophosphoramidase HINT1 (HINT1) (Oryctolagus cuniculus (Rabbit)).